The chain runs to 632 residues: tRNA uridine 5-carboxymethylaminomethyl modification enzyme MnmG (632 aa).

FAD-binding positions include 13 to 18 (GGGHAG), Val-125, and Ser-180. Position 273–287 (273–287 (GPRYCPSIEDKVVRF)) interacts with NAD(+). Gln-370 lines the FAD pocket.

The protein belongs to the MnmG family. In terms of assembly, homodimer. Heterotetramer of two MnmE and two MnmG subunits. The cofactor is FAD.

The protein localises to the cytoplasm. NAD-binding protein involved in the addition of a carboxymethylaminomethyl (cmnm) group at the wobble position (U34) of certain tRNAs, forming tRNA-cmnm(5)s(2)U34. In Nitrosospira multiformis (strain ATCC 25196 / NCIMB 11849 / C 71), this protein is tRNA uridine 5-carboxymethylaminomethyl modification enzyme MnmG.